The sequence spans 405 residues: Tryptophan synthase beta chain (405 aa).

Lys96 is modified (N6-(pyridoxal phosphate)lysine).

It belongs to the TrpB family. In terms of assembly, tetramer of two alpha and two beta chains. Requires pyridoxal 5'-phosphate as cofactor.

It catalyses the reaction (1S,2R)-1-C-(indol-3-yl)glycerol 3-phosphate + L-serine = D-glyceraldehyde 3-phosphate + L-tryptophan + H2O. Its pathway is amino-acid biosynthesis; L-tryptophan biosynthesis; L-tryptophan from chorismate: step 5/5. Functionally, the beta subunit is responsible for the synthesis of L-tryptophan from indole and L-serine. In Clostridium botulinum (strain Alaska E43 / Type E3), this protein is Tryptophan synthase beta chain.